The sequence spans 404 residues: Cysteine desulfurase IscS (404 aa).

Pyridoxal 5'-phosphate-binding positions include Ala75–Thr76, Asn155, Gln183, and Ser203–His205. Position 206 is an N6-(pyridoxal phosphate)lysine (Lys206). Thr243 contacts pyridoxal 5'-phosphate. The active-site Cysteine persulfide intermediate is the Cys328. Cys328 contacts [2Fe-2S] cluster.

This sequence belongs to the class-V pyridoxal-phosphate-dependent aminotransferase family. NifS/IscS subfamily. Homodimer. Forms a heterotetramer with IscU, interacts with other sulfur acceptors. The cofactor is pyridoxal 5'-phosphate.

Its subcellular location is the cytoplasm. The catalysed reaction is (sulfur carrier)-H + L-cysteine = (sulfur carrier)-SH + L-alanine. It participates in cofactor biosynthesis; iron-sulfur cluster biosynthesis. Functionally, master enzyme that delivers sulfur to a number of partners involved in Fe-S cluster assembly, tRNA modification or cofactor biosynthesis. Catalyzes the removal of elemental sulfur atoms from cysteine to produce alanine. Functions as a sulfur delivery protein for Fe-S cluster synthesis onto IscU, an Fe-S scaffold assembly protein, as well as other S acceptor proteins. The protein is Cysteine desulfurase IscS of Vibrio vulnificus (strain CMCP6).